A 774-amino-acid polypeptide reads, in one-letter code: Cilium assembly protein DZIP1L (774 aa).

A C2H2-type zinc finger spans residues 166-189 (HTCHLCDKTFMNATFLRGHIQRRH). A coiled-coil region spans residues 204–450 (LGEVLEELRA…RKVLAALRKN (247 aa)). Disordered regions lie at residues 415–435 (MPKA…ASLE), 515–674 (NKEV…ASSG), and 686–774 (KQLE…IPGW). Over residues 421-433 (TEEDSSEEELEAS) the composition is skewed to acidic residues. Phosphoserine occurs at positions 425 and 426. Over residues 515–526 (NKEVSSRVKQRW) the composition is skewed to basic and acidic residues. The segment covering 597–616 (GPSSTPVSPGSGLSSTPPFS) has biased composition (low complexity).

The protein belongs to the DZIP C2H2-type zinc-finger protein family. As to quaternary structure, interacts with SEPTIN2.

Its subcellular location is the cytoplasm. It localises to the cytoskeleton. The protein localises to the cilium basal body. It is found in the microtubule organizing center. The protein resides in the centrosome. Its subcellular location is the centriole. In terms of biological role, involved in primary cilium formation. Probably acts as a transition zone protein required for localization of PKD1/PC1 and PKD2/PC2 to the ciliary membrane. This chain is Cilium assembly protein DZIP1L, found in Mus musculus (Mouse).